Reading from the N-terminus, the 372-residue chain is MGANTFGKLLAVTTFGESHGPAIGCVIDGCPPGLELAAEEFAHDLQRRATGRSRHTSARREADEVEILSGVYEGRTTGTPIALLIRNTDQRSKDYATIARQFRPGHADYTYWQKYGIRDPRGGGRSSARETTMRVAAGVVAKKWLKQRYGVIVRGFLSQLGEIRPEGFAWDAVEDNPFFWPQAAQVPELEAYMDALRKSGNSVGARVDVVAEGVPPGWGEPIYGKLDGELAAALMSINAVKGVEIGAGFGSTVQKGTEHRDLMTPLGFLSNHAGGIIGGITTGQPIIVSIALKPTSSLRLPGETVDVDGHPVQVITKGRHDPCVGIRAPPIAEAMVALVLMDQALRHRAQCGDVGEMSPCILENVGFRNADD.

NADP(+) contacts are provided by R48 and R54. Residues 125 to 127 (RSS), 238 to 239 (NA), G278, 293 to 297 (KPTSS), and R319 each bind FMN.

The protein belongs to the chorismate synthase family. In terms of assembly, homotetramer. Requires FMNH2 as cofactor.

The enzyme catalyses 5-O-(1-carboxyvinyl)-3-phosphoshikimate = chorismate + phosphate. The protein operates within metabolic intermediate biosynthesis; chorismate biosynthesis; chorismate from D-erythrose 4-phosphate and phosphoenolpyruvate: step 7/7. Functionally, catalyzes the anti-1,4-elimination of the C-3 phosphate and the C-6 proR hydrogen from 5-enolpyruvylshikimate-3-phosphate (EPSP) to yield chorismate, which is the branch point compound that serves as the starting substrate for the three terminal pathways of aromatic amino acid biosynthesis. This reaction introduces a second double bond into the aromatic ring system. The protein is Chorismate synthase of Xylella fastidiosa (strain 9a5c).